A 365-amino-acid polypeptide reads, in one-letter code: Eukaryotic translation initiation factor 3 subunit H (365 aa).

The region spanning 11 to 160 (VKVEALVVMK…LRAFRLSPKF (150 aa)) is the MPN domain.

It belongs to the eIF-3 subunit H family. Component of the eukaryotic translation initiation factor 3 (eIF-3) complex.

The protein resides in the cytoplasm. Component of the eukaryotic translation initiation factor 3 (eIF-3) complex, which is involved in protein synthesis of a specialized repertoire of mRNAs and, together with other initiation factors, stimulates binding of mRNA and methionyl-tRNAi to the 40S ribosome. The eIF-3 complex specifically targets and initiates translation of a subset of mRNAs involved in cell proliferation. The protein is Eukaryotic translation initiation factor 3 subunit H of Aspergillus clavatus (strain ATCC 1007 / CBS 513.65 / DSM 816 / NCTC 3887 / NRRL 1 / QM 1276 / 107).